Reading from the N-terminus, the 235-residue chain is Ribonuclease 3 (235 aa).

The RNase III domain occupies 11 to 137 (RAWCAEALGY…VVGALYLDGG (127 aa)). Glutamate 51 is a binding site for Mg(2+). Aspartate 55 is an active-site residue. Aspartate 123 and glutamate 126 together coordinate Mg(2+). Glutamate 126 is an active-site residue. Positions 164–233 (DYKTQLQEQL…ARQALMPEHH (70 aa)) constitute a DRBM domain.

Belongs to the ribonuclease III family. Homodimer. It depends on Mg(2+) as a cofactor.

It is found in the cytoplasm. The catalysed reaction is Endonucleolytic cleavage to 5'-phosphomonoester.. Digests double-stranded RNA. Involved in the processing of primary rRNA transcript to yield the immediate precursors to the large and small rRNAs (23S and 16S). Processes some mRNAs, and tRNAs when they are encoded in the rRNA operon. Processes pre-crRNA and tracrRNA of type II CRISPR loci if present in the organism. This is Ribonuclease 3 from Symbiobacterium thermophilum (strain DSM 24528 / JCM 14929 / IAM 14863 / T).